A 955-amino-acid chain; its full sequence is Probable trehalose monomycolate exporter MmpL3 (955 aa).

Residues 1–13 (MFAWWGRTVYRYR) are Cytoplasmic-facing. A helical transmembrane segment spans residues 14-34 (FIVIGITVALCLCGGVFGLSL). Residues 35-190 (GKHVTQSGFY…TIATDQRRME (156 aa)) are Periplasmic-facing. 40-44 (QSGFY) is an a 1,2-diacylglycero-3-phosphoethanolamine binding site. A helical membrane pass occupies residues 191–213 (VLALPLVAVVLFLVFGGVIAACL). Residues 214–219 (PVMVGG) lie on the Cytoplasmic side of the membrane. Residues 220-236 (LSIAGALGILRFIALFG) traverse the membrane as a helical segment. The Periplasmic portion of the chain corresponds to 237–244 (PVHFFAQP). A helical transmembrane segment spans residues 245–262 (VVSLIGLGIAVDYGLFVV). The Cytoplasmic portion of the chain corresponds to 263-291 (SRFREEIAEGYDTEAAVRRTVMTAGRTVT). The helical transmembrane segment at 292–312 (FSAVLIAASGASLLLLPQGFV) threads the bilayer. Residues 313–319 (KSLTYAL) are Periplasmic-facing. A helical transmembrane segment spans residues 320 to 340 (IAAVTLAALLSITLLPACLAI). Over 341 to 401 (LAKHVDALGV…KLVNFVMKRP (61 aa)) the chain is Cytoplasmic. A helical transmembrane segment spans residues 402 to 422 (LVFAIPIVIGMILLVIPLGNL). Residues 423–567 (SFGGMSEKYL…HSLVAQAPLM (145 aa)) lie on the Periplasmic side of the membrane. A helical membrane pass occupies residues 568–588 (VIMLITTTMLLMFLAFGSFVL). Residues 589–591 (PIK) are Cytoplasmic-facing. A helical membrane pass occupies residues 592 to 612 (AAVMSALTLGSTMGILTWIFV). Topologically, residues 613 to 621 (DGHLSKWLN) are periplasmic. Residues 622–642 (FTPTPLMVVIIALVVAVGYGL) form a helical membrane-spanning segment. Topologically, residues 643-678 (ATDYEVFLVSRMVEARAESMSTQEAVRIGTASTGRL) are cytoplasmic. The helical transmembrane segment at 679–699 (ITAAALVLAVVAGSFVFSDLV) threads the bilayer. The Periplasmic segment spans residues 700–703 (MMKY). A helical membrane pass occupies residues 704-724 (LAFGLMAALLLDATVVRMFLV). The Cytoplasmic portion of the chain corresponds to 725-955 (PSVMKLLGDD…QDLLRREGRL (231 aa)). Residues 759–955 (ERRRPTVSGR…QDLLRREGRL (197 aa)) are disordered. 2 stretches are compositionally biased toward polar residues: residues 821-860 (GAST…SQGV) and 890-902 (NRSS…TAEP).

The protein belongs to the resistance-nodulation-cell division (RND) (TC 2.A.6) family. MmpL subfamily.

It is found in the cell inner membrane. It localises to the cell septum. Its subcellular location is the cell tip. In terms of biological role, transports trehalose monomycolate (TMM) to the cell wall. Flips TMM across the inner membrane. Membrane potential is not required for this function. Transports probably phosphatidylethanolamine (PE) as well. Contributes to membrane potential, cell wall composition, antibiotic susceptibility and fitness. The protein is Probable trehalose monomycolate exporter MmpL3 (mmpL3) of Mycobacterium leprae (strain TN).